Consider the following 174-residue polypeptide: RNA pyrophosphohydrolase (174 aa).

Residues 6–149 (GYRPNVGIIL…KRDVYLGALK (144 aa)) enclose the Nudix hydrolase domain. Residues 38 to 59 (GGIKPGESPETAMYRELYEEVG) carry the Nudix box motif.

This sequence belongs to the Nudix hydrolase family. RppH subfamily. A divalent metal cation is required as a cofactor.

Its function is as follows. Accelerates the degradation of transcripts by removing pyrophosphate from the 5'-end of triphosphorylated RNA, leading to a more labile monophosphorylated state that can stimulate subsequent ribonuclease cleavage. The polypeptide is RNA pyrophosphohydrolase (Neisseria meningitidis serogroup C / serotype 2a (strain ATCC 700532 / DSM 15464 / FAM18)).